A 91-amino-acid chain; its full sequence is ATP synthase subunit c (91 aa).

A run of 2 helical transmembrane segments spans residues 4 to 24 (FTMC…GTGI) and 53 to 73 (IGLA…LIIL).

The protein belongs to the ATPase C chain family. In terms of assembly, F-type ATPases have 2 components, F(1) - the catalytic core - and F(0) - the membrane proton channel. F(1) has five subunits: alpha(3), beta(3), gamma(1), delta(1), epsilon(1). F(0) has three main subunits: a(1), b(2) and c(10-14). The alpha and beta chains form an alternating ring which encloses part of the gamma chain. F(1) is attached to F(0) by a central stalk formed by the gamma and epsilon chains, while a peripheral stalk is formed by the delta and b chains.

The protein resides in the cell inner membrane. Its function is as follows. F(1)F(0) ATP synthase produces ATP from ADP in the presence of a proton or sodium gradient. F-type ATPases consist of two structural domains, F(1) containing the extramembraneous catalytic core and F(0) containing the membrane proton channel, linked together by a central stalk and a peripheral stalk. During catalysis, ATP synthesis in the catalytic domain of F(1) is coupled via a rotary mechanism of the central stalk subunits to proton translocation. Key component of the F(0) channel; it plays a direct role in translocation across the membrane. A homomeric c-ring of between 10-14 subunits forms the central stalk rotor element with the F(1) delta and epsilon subunits. This is ATP synthase subunit c from Trichlorobacter lovleyi (strain ATCC BAA-1151 / DSM 17278 / SZ) (Geobacter lovleyi).